We begin with the raw amino-acid sequence, 271 residues long: MKKMILIAGPCVIESKDLIFKVAEQLKNFNENPNIEFYFKSSFDKANRTSINSFRGPGLEEGLKILQSVKDEFGMKILTDIHESNQAAAVSEVADVLQIPAFLCRQTDLLVAAAKTKAKVNIKKGQFLNPSDIKYSVKKVLQTRGIEDEGYEAAQKNGVFVAERGASFGYGNLVVDMRSLVIMREFAPVIFDATHSVQMPGAAGGSSGGKSEFVEPLARAAAAVGIDGFFFETHINPCEALCDGPNMLNLTRLKNCVNTLLEIQNIIKENK.

This sequence belongs to the KdsA family.

It localises to the cytoplasm. The enzyme catalyses D-arabinose 5-phosphate + phosphoenolpyruvate + H2O = 3-deoxy-alpha-D-manno-2-octulosonate-8-phosphate + phosphate. It participates in carbohydrate biosynthesis; 3-deoxy-D-manno-octulosonate biosynthesis; 3-deoxy-D-manno-octulosonate from D-ribulose 5-phosphate: step 2/3. It functions in the pathway bacterial outer membrane biogenesis; lipopolysaccharide biosynthesis. The protein is 2-dehydro-3-deoxyphosphooctonate aldolase of Campylobacter jejuni subsp. jejuni serotype O:6 (strain 81116 / NCTC 11828).